A 142-amino-acid chain; its full sequence is 3-hydroxyacyl-[acyl-carrier-protein] dehydratase FabZ (142 aa).

His-48 is an active-site residue.

It belongs to the thioester dehydratase family. FabZ subfamily.

Its subcellular location is the cytoplasm. The enzyme catalyses a (3R)-hydroxyacyl-[ACP] = a (2E)-enoyl-[ACP] + H2O. In terms of biological role, involved in unsaturated fatty acids biosynthesis. Catalyzes the dehydration of short chain beta-hydroxyacyl-ACPs and long chain saturated and unsaturated beta-hydroxyacyl-ACPs. The protein is 3-hydroxyacyl-[acyl-carrier-protein] dehydratase FabZ of Anoxybacillus flavithermus (strain DSM 21510 / WK1).